Here is a 271-residue protein sequence, read N- to C-terminus: MSSHADSNPWTVPALAQAKRAGRKLVMLTAYDASFARTFDANGVDLILVGDSLGMVMQGHDSTLAVTTADMVYHTAAVARALDRALLVADLSFQADATPERALDAATQLLQAGAEMVKIEGAGHKLEVIRYLVEREIPVCSHLGLTPQSVLRFGGYKVQGRGEAGEQLRRDAQAVVDAGASLVVLECVPTPIATQISAELSVPTIGIGAGPGCDGQVLVMHDMLGLDSGHRRPKFVKDFLAEGGSVAGAVRAYAQAVRDGSFPDAEHAYAA.

Mg(2+) contacts are provided by aspartate 51 and aspartate 90. 3-methyl-2-oxobutanoate contacts are provided by residues 51–52 (DS), aspartate 90, and lysine 118. Residue glutamate 120 coordinates Mg(2+). The active-site Proton acceptor is the glutamate 186.

The protein belongs to the PanB family. In terms of assembly, homodecamer; pentamer of dimers. Requires Mg(2+) as cofactor.

The protein localises to the cytoplasm. The catalysed reaction is 3-methyl-2-oxobutanoate + (6R)-5,10-methylene-5,6,7,8-tetrahydrofolate + H2O = 2-dehydropantoate + (6S)-5,6,7,8-tetrahydrofolate. It functions in the pathway cofactor biosynthesis; (R)-pantothenate biosynthesis; (R)-pantoate from 3-methyl-2-oxobutanoate: step 1/2. Functionally, catalyzes the reversible reaction in which hydroxymethyl group from 5,10-methylenetetrahydrofolate is transferred onto alpha-ketoisovalerate to form ketopantoate. The polypeptide is 3-methyl-2-oxobutanoate hydroxymethyltransferase (Xanthomonas oryzae pv. oryzae (strain MAFF 311018)).